We begin with the raw amino-acid sequence, 343 residues long: Ornithine carbamoyltransferase, catabolic (343 aa).

62–65 provides a ligand contact to carbamoyl phosphate; sequence STRT. His79 contributes to the Ni(2+) binding site. Residues Gln89, Arg113, and 140-143 each bind carbamoyl phosphate; that span reads HPTQ. L-ornithine contacts are provided by residues Asn172, Asp236, and 240 to 241; that span reads SM. Carbamoyl phosphate-binding positions include 278–279 and Arg323; that span reads CL.

This sequence belongs to the aspartate/ornithine carbamoyltransferase superfamily. OTCase family. Homohexamer; dimer of trimers. The cofactor is Ni(2+).

The protein resides in the cytoplasm. The catalysed reaction is carbamoyl phosphate + L-ornithine = L-citrulline + phosphate + H(+). The protein operates within amino-acid degradation; L-arginine degradation via ADI pathway; carbamoyl phosphate from L-arginine: step 2/2. In terms of biological role, involved in the catabolism of arginine. Catalyzes the phosphorolysis of citrulline, the reverse reaction of the biosynthetic one, yielding ornithine and carbamoyl phosphate which serve to generate ATP from ADP. In Lentilactobacillus hilgardii (Lactobacillus hilgardii), this protein is Ornithine carbamoyltransferase, catabolic.